The chain runs to 375 residues: Erythronate-4-phosphate dehydrogenase (375 aa).

Residues Ser-45 and Thr-67 each contribute to the substrate site. Position 147 (Asp-147) interacts with NAD(+). Residue Arg-209 is part of the active site. Position 233 (Asp-233) interacts with NAD(+). Glu-238 is an active-site residue. Residue His-255 is the Proton donor of the active site. Gly-258 contributes to the NAD(+) binding site. Tyr-259 provides a ligand contact to substrate.

Belongs to the D-isomer specific 2-hydroxyacid dehydrogenase family. PdxB subfamily. In terms of assembly, homodimer.

It localises to the cytoplasm. It carries out the reaction 4-phospho-D-erythronate + NAD(+) = (R)-3-hydroxy-2-oxo-4-phosphooxybutanoate + NADH + H(+). It participates in cofactor biosynthesis; pyridoxine 5'-phosphate biosynthesis; pyridoxine 5'-phosphate from D-erythrose 4-phosphate: step 2/5. Its function is as follows. Catalyzes the oxidation of erythronate-4-phosphate to 3-hydroxy-2-oxo-4-phosphonooxybutanoate. The polypeptide is Erythronate-4-phosphate dehydrogenase (Shewanella amazonensis (strain ATCC BAA-1098 / SB2B)).